The chain runs to 766 residues: Oligopeptide transporter 7 (766 aa).

The interval 1–58 (MEESEQVLPLLTNPKDLTNPSYASSSSSSSEPRDETEDLLLPISDENEEEEEENSPIR) is disordered. The span at 45–54 (DENEEEEEEN) shows a compositional bias: acidic residues. A run of 15 helical transmembrane segments spans residues 79-99 (MWVL…FFWY), 104-124 (LTIS…LMAA), 154-174 (ITIF…VTVV), 184-204 (FFVS…WAGI), 247-267 (FVIA…LFQI), 287-307 (IGSG…STIS), 324-344 (VGVG…WLDV), 390-410 (LCTF…ATIM), 446-466 (VPEW…IFAC), 477-497 (WWGV…IGII), 509-529 (IITE…NMCF), 561-581 (FMAQ…TAWW), 627-647 (LYKS…LVWL), 676-696 (ATAV…FVVF), and 709-729 (VLSG…YMCL).

This sequence belongs to the oligopeptide OPT transporter (TC 2.A.67.1) family. As to expression, expressed in the major and the first-order veins and in the hydathodes of the leaves. In the roots, expressed in circular zones surrounding lateral root primordia and in some part of the root epidermis. Expressed also in the sepals and the cortical tissues of the stem, but not in the conducting bundles, the petals or the reproductive tissues.

It is found in the membrane. Involved in the translocation of tetra- and pentapeptides across the cellular membrane in an energy-dependent manner. May also transport cadmium complexes. The protein is Oligopeptide transporter 7 (OPT7) of Arabidopsis thaliana (Mouse-ear cress).